A 458-amino-acid chain; its full sequence is Bifunctional protein GlmU (458 aa).

The segment at 1–229 is pyrophosphorylase; sequence MTNYAIILAA…FNESLGVNDR (229 aa). Residues 8–11, lysine 22, glutamine 72, and 77–78 each bind UDP-N-acetyl-alpha-D-glucosamine; these read LAAG and GT. Aspartate 102 is a binding site for Mg(2+). UDP-N-acetyl-alpha-D-glucosamine is bound by residues glycine 139, glutamate 154, asparagine 169, and asparagine 227. Mg(2+) is bound at residue asparagine 227. Positions 230–250 are linker; it reads VALATAESVMRRRINKAHMIN. The interval 251–458 is N-acetyltransferase; it reads GVTFQNPDAT…AKRLPHYPQK (208 aa). Residues arginine 332 and lysine 350 each coordinate UDP-N-acetyl-alpha-D-glucosamine. Histidine 362 acts as the Proton acceptor in catalysis. UDP-N-acetyl-alpha-D-glucosamine-binding residues include tyrosine 365 and asparagine 376. Acetyl-CoA contacts are provided by residues alanine 379, 385–386, serine 404, alanine 422, and arginine 439; that span reads NY.

This sequence in the N-terminal section; belongs to the N-acetylglucosamine-1-phosphate uridyltransferase family. In the C-terminal section; belongs to the transferase hexapeptide repeat family. As to quaternary structure, homotrimer. The cofactor is Mg(2+).

It localises to the cytoplasm. The enzyme catalyses alpha-D-glucosamine 1-phosphate + acetyl-CoA = N-acetyl-alpha-D-glucosamine 1-phosphate + CoA + H(+). The catalysed reaction is N-acetyl-alpha-D-glucosamine 1-phosphate + UTP + H(+) = UDP-N-acetyl-alpha-D-glucosamine + diphosphate. It functions in the pathway nucleotide-sugar biosynthesis; UDP-N-acetyl-alpha-D-glucosamine biosynthesis; N-acetyl-alpha-D-glucosamine 1-phosphate from alpha-D-glucosamine 6-phosphate (route II): step 2/2. Its pathway is nucleotide-sugar biosynthesis; UDP-N-acetyl-alpha-D-glucosamine biosynthesis; UDP-N-acetyl-alpha-D-glucosamine from N-acetyl-alpha-D-glucosamine 1-phosphate: step 1/1. It participates in bacterial outer membrane biogenesis; LPS lipid A biosynthesis. In terms of biological role, catalyzes the last two sequential reactions in the de novo biosynthetic pathway for UDP-N-acetylglucosamine (UDP-GlcNAc). The C-terminal domain catalyzes the transfer of acetyl group from acetyl coenzyme A to glucosamine-1-phosphate (GlcN-1-P) to produce N-acetylglucosamine-1-phosphate (GlcNAc-1-P), which is converted into UDP-GlcNAc by the transfer of uridine 5-monophosphate (from uridine 5-triphosphate), a reaction catalyzed by the N-terminal domain. The protein is Bifunctional protein GlmU of Streptococcus uberis (strain ATCC BAA-854 / 0140J).